The chain runs to 406 residues: Acetylornithine aminotransferase (406 aa).

Residues 113–114 and Phe-145 contribute to the pyridoxal 5'-phosphate site; that span reads GT. Arg-148 contributes to the N(2)-acetyl-L-ornithine binding site. 233-236 provides a ligand contact to pyridoxal 5'-phosphate; that stretch reads DEIQ. Lys-262 bears the N6-(pyridoxal phosphate)lysine mark. Ser-290 is a binding site for N(2)-acetyl-L-ornithine. Pyridoxal 5'-phosphate is bound at residue Thr-291.

It belongs to the class-III pyridoxal-phosphate-dependent aminotransferase family. ArgD subfamily. In terms of assembly, homodimer. It depends on pyridoxal 5'-phosphate as a cofactor.

It localises to the cytoplasm. It carries out the reaction N(2)-acetyl-L-ornithine + 2-oxoglutarate = N-acetyl-L-glutamate 5-semialdehyde + L-glutamate. It functions in the pathway amino-acid biosynthesis; L-arginine biosynthesis; N(2)-acetyl-L-ornithine from L-glutamate: step 4/4. The chain is Acetylornithine aminotransferase from Leptospira interrogans serogroup Icterohaemorrhagiae serovar Lai (strain 56601).